Consider the following 423-residue polypeptide: Protein SOSEKI 5 (423 aa).

The disordered stretch occupies residues 1–33 (MSSRVFRATPDNNYLVPRRSKDQQDTSPDRNRI). The span at 19–33 (RSKDQQDTSPDRNRI) shows a compositional bias: basic and acidic residues. The segment at 45 to 136 (RKVPVVYYLC…YVLKGSEVLD (92 aa)) is DIX-like oligomerization domain. Disordered regions lie at residues 150–172 (SSFRDPRSLNPDKNSGDDIPAVI) and 196–258 (SSAE…SPET). The segment covering 196–211 (SSAESTQRLAADASTQ) has biased composition (polar residues). 2 consecutive short sequence motifs (association to cell membranes) follow at residues 233-234 (AS) and 303-304 (CG). The disordered stretch occupies residues 379–423 (SSSYNADRCSRMGPTTEKDEEEAVRAKCIPRKPKPVAKRNNGGQQ). The segment covering 406 to 415 (CIPRKPKPVA) has biased composition (basic residues).

The protein belongs to the SOSEKI family. As to quaternary structure, homodimer. Forms long polymer filaments with other SOKs proteins polymers (e.g. SOK1, SOK2, SOK3 and SOK4) crucial for polar localization and biological activity. Binds to ANGUSTIFOLIA (AN). As to expression, expressed during embryogenesis and in roots.

It localises to the cell membrane. Its function is as follows. SOSEKI proteins (SOK1-5) locally interpret global polarity cues and can influence cell division orientation to coordinate cell polarization relative to body axes. The sequence is that of Protein SOSEKI 5 from Arabidopsis thaliana (Mouse-ear cress).